The following is a 355-amino-acid chain: Capsular polysaccharide biosynthesis glycosyltransferase CapH (355 aa).

It belongs to the glycosyltransferase group 1 family. Glycosyltransferase 4 subfamily.

It functions in the pathway capsule biogenesis; capsule polysaccharide biosynthesis. Its function is as follows. Required for the biosynthesis of type 1 capsular polysaccharide. In Staphylococcus aureus, this protein is Capsular polysaccharide biosynthesis glycosyltransferase CapH (capH).